The chain runs to 215 residues: Vesicle-trafficking protein SEC22b (215 aa).

Topologically, residues 2–194 are cytoplasmic; sequence VLLTMIARVA…KYLNMRSTYA (193 aa). A Longin domain is found at 6–119; it reads MIARVADGLP…YSFIEFDTFI (114 aa). Lysine 38 bears the N6-acetyllysine mark. The v-SNARE coiled-coil homology domain maps to 134 to 194; the sequence is NLGSINTELQ…KYLNMRSTYA (61 aa). Phosphoserine is present on serine 137. Threonine 140 carries the post-translational modification Phosphothreonine. Phosphoserine is present on residues serine 164, serine 168, serine 174, and serine 177. Residues 195-215 form a helical; Anchor for type IV membrane protein membrane-spanning segment; sequence KLAAVAVFFIMLIVYVRFWWL.

It belongs to the synaptobrevin family. Interacts with STX17. Component of two distinct SNARE complexes consisting of STX5, GOSR2/BOS1, BET1 and SEC22B or STX18, USE1L, BNIP1/SEC20L and SEC22B. YKT6 can probably replace SEC22B in either complex. Interacts with the COPII Sec23/24 complex composed of SEC23A and SEC24A; recruits SEC22B into COPII-coated vesicles to allow its transport from the endoplasmic reticulum to the Golgi. Interacts with BET1.

The protein localises to the endoplasmic reticulum membrane. It localises to the endoplasmic reticulum-Golgi intermediate compartment membrane. The protein resides in the golgi apparatus. Its subcellular location is the cis-Golgi network membrane. It is found in the trans-Golgi network membrane. The protein localises to the melanosome. Functionally, SNARE involved in targeting and fusion of ER-derived transport vesicles with the Golgi complex as well as Golgi-derived retrograde transport vesicles with the ER. In Homo sapiens (Human), this protein is Vesicle-trafficking protein SEC22b (SEC22B).